A 306-amino-acid chain; its full sequence is Recombination-associated protein RdgC (306 aa).

This sequence belongs to the RdgC family.

It localises to the cytoplasm. The protein localises to the nucleoid. Its function is as follows. May be involved in recombination. The sequence is that of Recombination-associated protein RdgC from Pseudomonas syringae pv. tomato (strain ATCC BAA-871 / DC3000).